A 260-amino-acid polypeptide reads, in one-letter code: Alpha-acetolactate decarboxylase (260 aa).

It belongs to the alpha-acetolactate decarboxylase family.

It carries out the reaction (2S)-2-acetolactate + H(+) = (R)-acetoin + CO2. Its pathway is polyol metabolism; (R,R)-butane-2,3-diol biosynthesis; (R,R)-butane-2,3-diol from pyruvate: step 2/3. Functionally, converts acetolactate into acetoin. This chain is Alpha-acetolactate decarboxylase (budA), found in Methylococcus capsulatus (strain ATCC 33009 / NCIMB 11132 / Bath).